The chain runs to 2150 residues: A disintegrin and metalloproteinase with thrombospondin motifs gon-1 (2150 aa).

The signal sequence occupies residues 1–28; sequence MRSIGGSFHLLQPVVAALILLVVCLVYA. The propeptide occupies 29–273; sequence LQSGSGTISE…VIERKARSRR (245 aa). Asn134, Asn213, Asn243, and Asn248 each carry an N-linked (GlcNAc...) asparagine glycan. The Peptidase M12B domain occupies 280–493; sequence HYVEVLVVAD…GQTQCLFDQP (214 aa). 2 disulfide bridges follow: Cys402–Cys488 and Cys440–Cys470. Zn(2+) is bound at residue His424. Glu425 is an active-site residue. Zn(2+)-binding residues include His428 and His434. A Disintegrin domain is found at 503-587; sequence FVRDEPGKKY…RLAPESLTKI (85 aa). Positions 588-643 constitute a TSP type-1 1 domain; that stretch reads DGQWGDWRSWGECSRTCGGGVQKGLRDCDSPKPRNGGKYCVGQRERYRSCNTQECP. Disulfide bonds link Cys600–Cys637, Cys604–Cys642, and Cys615–Cys627. The N-linked (GlcNAc...) asparagine glycan is linked to Asn842. TSP type-1 domains are found at residues 943–1003, 1004–1057, 1060–1115, 1116–1165, 1168–1227, 1228–1277, 1280–1339, 1352–1409, 1410–1469, 1474–1524, and 1527–1585; these read CSTR…IDCS, GRKW…RECN, PCPR…HACT, WWQF…KPCH, SCPK…GTCP, FWRN…QTCH, PCTS…DTCD, PPIR…RDCS, YWKM…EPCP, HIGS…ELCP, and TNNS…PPCR. Residues Asn1139 and Asn1199 are each glycosylated (N-linked (GlcNAc...) asparagine). 2 N-linked (GlcNAc...) asparagine glycosylation sites follow: Asn1370 and Asn1432. Asn1528, Asn1590, Asn1606, and Asn1654 each carry an N-linked (GlcNAc...) asparagine glycan. The disordered stretch occupies residues 1590-1614; that stretch reads NKTSSASMTSLSSSNSNTTSSASAS. A compositionally biased stretch (low complexity) spans 1592–1614; it reads TSSASMTSLSSSNSNTTSSASAS. TSP type-1 domains are found at residues 1621–1675, 1678–1736, 1737–1793, 1794–1866, and 1867–1924; these read PVVS…VRCR, HCPR…VACP, AYRW…DTSN, CPYE…NPCD, and SEFK…RNCL. Cystine bridges form between Cys1679–Cys1718, Cys1690–Cys1694, Cys1690–Cys1730, Cys1694–Cys1735, Cys1705–Cys1718, and Cys1730–Cys1735. Residues Asn1828 and Asn1855 are each glycosylated (N-linked (GlcNAc...) asparagine). Residues 1924 to 2123 enclose the GON domain; that stretch reads LPSTCQELKS…RYKGLIFEVN (200 aa). Residues Asn1942, Asn1960, and Asn1997 are each glycosylated (N-linked (GlcNAc...) asparagine).

The cofactor is Zn(2+). In terms of tissue distribution, expressed by the gonadal distal tip cells (DTCs). Expressed in muscles, including body wall, vulval and anal depressor muscles. Expressed in motor neurons and in ASI and ASJ neurons.

The protein localises to the secreted. It is found in the extracellular space. Its subcellular location is the extracellular matrix. The protein resides in the basement membrane. It localises to the endoplasmic reticulum. The protein localises to the golgi apparatus. Secreted metalloprotease required for distal tip cell (DTC) migration along the body wall basement membranes, a key step that promotes gonad morphogenesis. Probably acts by remodeling the basement membrane during cell migration. Required to restrict presynaptic growth at the neuromuscular junctions (NMJ) in late larval stage and in adult motor neurons, probably by controlling collagen IV emb-9 degradation, a component of the synapse basement membrane. Also involved in the organization of adult muscle morphology. Has a protease-independent function in promoting the transport from the endoplasmic reticulum to the Golgi apparatus of a variety of secretory cargos. Required for the secretion of insulin-like peptide ins-7, daf-28 and ins-18 and TGF beta-like protein daf-7. In peripheral tissues, negatively regulates insulin-mediated daf-16 translocation and thereby negatively regulates lifespan and dauer formation. The polypeptide is A disintegrin and metalloproteinase with thrombospondin motifs gon-1 (Caenorhabditis elegans).